Here is a 451-residue protein sequence, read N- to C-terminus: MSEKEIWDKVLEIAQERISNTSYQTFIKDTQLYSLKNDEAIILVSLPFNASWLNQRYSEIMQAIIYDVIGYEVKPHFISEDELASYNNVNTQEVQEPQVQHSSIDDKTWGKEQFNMHNTFDTFVIGPGNRFPHAASLAVAEAPAEAYNPLFIYGGVGLGKTHLMHAIGHHVLSNKPNAKVIYTSSEKFTNEFIKSIRDNETEAFREKYRKIDVLLIDDIQFIQNKEQTQEEFFHTFNELHQNNKQIVISSDRPPKEIAKLEDRLRSRFEWGLIVDITPPDYETRMAILQKKIEEENLDIPPEALNYIANQIQSNIRELEGALTRLLAYSKLQGKPITTELTAEALKDIIQSPKSKKITIQDIQKIVGQYYSVRIEDFSAKKRTKSIAYPRQIAMYLSRELTDFSLPKIGEEFGGRDHTTVIHAHEKIANDIKSDPTFKQEVENLEKEIRNQ.

The tract at residues 1–71 (MSEKEIWDKV…QAIIYDVIGY (71 aa)) is domain I, interacts with DnaA modulators. The domain II stretch occupies residues 71-112 (YEVKPHFISEDELASYNNVNTQEVQEPQVQHSSIDDKTWGKE). The tract at residues 113–329 (QFNMHNTFDT…GALTRLLAYS (217 aa)) is domain III, AAA+ region. ATP contacts are provided by glycine 157, glycine 159, lysine 160, and threonine 161. The interval 330–451 (KLQGKPITTE…ENLEKEIRNQ (122 aa)) is domain IV, binds dsDNA.

This sequence belongs to the DnaA family. As to quaternary structure, oligomerizes as a right-handed, spiral filament on DNA at oriC.

Its subcellular location is the cytoplasm. Plays an essential role in the initiation and regulation of chromosomal replication. ATP-DnaA binds to the origin of replication (oriC) to initiate formation of the DNA replication initiation complex once per cell cycle. Binds the DnaA box (a 9 base pair repeat at the origin) and separates the double-stranded (ds)DNA. Forms a right-handed helical filament on oriC DNA; dsDNA binds to the exterior of the filament while single-stranded (ss)DNA is stabiized in the filament's interior. The ATP-DnaA-oriC complex binds and stabilizes one strand of the AT-rich DNA unwinding element (DUE), permitting loading of DNA polymerase. After initiation quickly degrades to an ADP-DnaA complex that is not apt for DNA replication. Binds acidic phospholipids. In Staphylococcus epidermidis (strain ATCC 35984 / DSM 28319 / BCRC 17069 / CCUG 31568 / BM 3577 / RP62A), this protein is Chromosomal replication initiator protein DnaA.